Here is a 1083-residue protein sequence, read N- to C-terminus: DNA-directed RNA polymerase subunit beta (1083 aa).

It belongs to the RNA polymerase beta chain family. In plastids the minimal PEP RNA polymerase catalytic core is composed of four subunits: alpha, beta, beta', and beta''. When a (nuclear-encoded) sigma factor is associated with the core the holoenzyme is formed, which can initiate transcription.

The protein resides in the plastid. It localises to the chloroplast. The catalysed reaction is RNA(n) + a ribonucleoside 5'-triphosphate = RNA(n+1) + diphosphate. In terms of biological role, DNA-dependent RNA polymerase catalyzes the transcription of DNA into RNA using the four ribonucleoside triphosphates as substrates. The protein is DNA-directed RNA polymerase subunit beta of Acorus calamus var. americanus (American sweet flag).